We begin with the raw amino-acid sequence, 430 residues long: Zinc finger CCCH domain-containing protein 48 (430 aa).

Disordered regions lie at residues 1–27 and 56–90; these read MDLD…TTDS and GSGP…GTAN. A C3H1-type 1 zinc finger spans residues 26–52; the sequence is DSNQKVCFHWRAGRCNRYPCPYLHREL. The C3H1-type 2 zinc-finger motif lies at 102 to 129; it reads TKTEKLCKFWVDGNCPYGDKCRYLHCWS. 6 WD repeats span residues 142-183, 221-258, 265-304, 306-342, 345-389, and 391-429; these read GHQK…GVLN, GPVG…SCFD, GHTL…QTLT, HTSV…NLEV, THKE…ERGK, and LAKQ…TPIL.

The protein is Zinc finger CCCH domain-containing protein 48 (ZFWD1) of Arabidopsis thaliana (Mouse-ear cress).